Reading from the N-terminus, the 65-residue chain is Small ribosomal subunit protein bS21B (65 aa).

This sequence belongs to the bacterial ribosomal protein bS21 family.

This Francisella tularensis subsp. holarctica (strain LVS) protein is Small ribosomal subunit protein bS21B.